The chain runs to 194 residues: Flavin prenyltransferase UbiX (194 aa).

FMN contacts are provided by residues 9–11 (GAS), Ser-35, 86–89 (SIKT), and Arg-121. Dimethylallyl phosphate is bound by residues Tyr-151 and Lys-167.

This sequence belongs to the UbiX/PAD1 family.

It catalyses the reaction dimethylallyl phosphate + FMNH2 = prenylated FMNH2 + phosphate. Its function is as follows. Involved in the carboxylation of phenylphosphate. Functionally, flavin prenyltransferase that catalyzes the synthesis of the prenylated FMN cofactor (prenyl-FMN) for 4-hydroxy-3-polyprenylbenzoic acid decarboxylase UbiD. The prenyltransferase is metal-independent and links a dimethylallyl moiety from dimethylallyl monophosphate (DMAP) to the flavin N5 and C6 atoms of FMN. This chain is Flavin prenyltransferase UbiX, found in Thauera aromatica.